We begin with the raw amino-acid sequence, 137 residues long: MLQPKRTKYRKVHKGRNEGLSWSANAVSFGEYGLKATAHGQLTARQIEAARRSISRYVKRGGKMWIRVFPDKPITKKPIEVRMGSGKGNVEYWVAQIQPGRMIYEIEGVTEDVAREAFRLAAAKLSVTTTFVTRTVR.

It belongs to the universal ribosomal protein uL16 family. In terms of assembly, part of the 50S ribosomal subunit.

Functionally, binds 23S rRNA and is also seen to make contacts with the A and possibly P site tRNAs. The protein is Large ribosomal subunit protein uL16 of Stenotrophomonas maltophilia (strain R551-3).